Consider the following 648-residue polypeptide: Biosynthetic arginine decarboxylase (648 aa).

Position 109 is an N6-(pyridoxal phosphate)lysine (lysine 109). Substrate is bound at residue 291 to 301 (LDVGGGLGVDY).

It belongs to the Orn/Lys/Arg decarboxylase class-II family. SpeA subfamily. Requires Mg(2+) as cofactor. Pyridoxal 5'-phosphate serves as cofactor.

It carries out the reaction L-arginine + H(+) = agmatine + CO2. Its function is as follows. Catalyzes the biosynthesis of agmatine from arginine. In Prochlorococcus marinus (strain MIT 9313), this protein is Biosynthetic arginine decarboxylase.